Here is a 142-residue protein sequence, read N- to C-terminus: Large ribosomal subunit protein uL11 (142 aa).

It belongs to the universal ribosomal protein uL11 family. Part of the ribosomal stalk of the 50S ribosomal subunit. Interacts with L10 and the large rRNA to form the base of the stalk. L10 forms an elongated spine to which L12 dimers bind in a sequential fashion forming a multimeric L10(L12)X complex. Post-translationally, one or more lysine residues are methylated.

Functionally, forms part of the ribosomal stalk which helps the ribosome interact with GTP-bound translation factors. This Shewanella sp. (strain W3-18-1) protein is Large ribosomal subunit protein uL11.